The primary structure comprises 251 residues: MRFDIVTLFPEMVRDAARYGVTGRALAAGKVSLEVWNPRDFTRDRHRTVDDRPYGGGPGMVMKVEPLRDAIRAAKGQATPGARVVLMSPQGTRLDQAAVRRFAAAPGLILVAGRYEGVDERLIETEIDEEWSIGDYVLSGGELPALVVFDAVVRLLPGVLGDAESAEQDSHAEGLLDHPHYTRPERVAGRDVPAVLQSGNHAAIGRWRLKQALGKTWLKRPDLLACRVMTPEQLELLDEFKREFELQKNRG.

Residues Gly113 and 133–138 (IGDYVL) contribute to the S-adenosyl-L-methionine site.

This sequence belongs to the RNA methyltransferase TrmD family. Homodimer.

It localises to the cytoplasm. The catalysed reaction is guanosine(37) in tRNA + S-adenosyl-L-methionine = N(1)-methylguanosine(37) in tRNA + S-adenosyl-L-homocysteine + H(+). In terms of biological role, specifically methylates guanosine-37 in various tRNAs. In Methylococcus capsulatus (strain ATCC 33009 / NCIMB 11132 / Bath), this protein is tRNA (guanine-N(1)-)-methyltransferase.